The primary structure comprises 431 residues: Enolase (431 aa).

A (2R)-2-phosphoglycerate-binding site is contributed by Gln-167. Glu-209 (proton donor) is an active-site residue. Asp-246, Glu-290, and Asp-317 together coordinate Mg(2+). Lys-342, Arg-371, Ser-372, and Lys-393 together coordinate (2R)-2-phosphoglycerate. Lys-342 acts as the Proton acceptor in catalysis.

The protein belongs to the enolase family. Component of the RNA degradosome, a multiprotein complex involved in RNA processing and mRNA degradation. Mg(2+) serves as cofactor.

Its subcellular location is the cytoplasm. The protein resides in the secreted. It localises to the cell surface. The catalysed reaction is (2R)-2-phosphoglycerate = phosphoenolpyruvate + H2O. It functions in the pathway carbohydrate degradation; glycolysis; pyruvate from D-glyceraldehyde 3-phosphate: step 4/5. In terms of biological role, catalyzes the reversible conversion of 2-phosphoglycerate (2-PG) into phosphoenolpyruvate (PEP). It is essential for the degradation of carbohydrates via glycolysis. The chain is Enolase from Yersinia pestis bv. Antiqua (strain Antiqua).